Here is a 167-residue protein sequence, read N- to C-terminus: MASQSKTSVHDFTVKDAKGQDVDLSIYKGKLLLIVNVASQCGLTNSNYTELSQLYDKYKNQGLEILAFPCNQFGAQEPGDNEQIQEFACTRFKAEFPIFDKVDVNGDNAAPLYKHLKSSKGGLFGDSIKWNFSKFLVDKEGNVVERYAPTTSPLSIEKDIKKLLETA.

Residue cysteine 41 is part of the active site.

This sequence belongs to the glutathione peroxidase family.

The protein resides in the cytoplasm. The catalysed reaction is a hydroperoxy polyunsaturated fatty acid + 2 glutathione = a hydroxy polyunsaturated fatty acid + glutathione disulfide + H2O. In terms of biological role, protects cells and enzymes from oxidative damage, by catalyzing the reduction of hydrogen peroxide, lipid peroxides and organic hydroperoxide, by glutathione. In Citrus sinensis (Sweet orange), this protein is Probable phospholipid hydroperoxide glutathione peroxidase (CSA).